Consider the following 343-residue polypeptide: Dihydroorotase (343 aa).

Residues His14 and His16 each coordinate Zn(2+). Residues 16–18 and Asn42 contribute to the substrate site; that span reads HLR. 3 residues coordinate Zn(2+): Lys99, His136, and His174. N6-carboxylysine is present on Lys99. A substrate-binding site is contributed by His136. Leu219 lines the substrate pocket. Residue Asp247 coordinates Zn(2+). Residue Asp247 is part of the active site. The substrate site is built by His251 and Ala263.

Belongs to the metallo-dependent hydrolases superfamily. DHOase family. Class II DHOase subfamily. In terms of assembly, homodimer. Requires Zn(2+) as cofactor.

It catalyses the reaction (S)-dihydroorotate + H2O = N-carbamoyl-L-aspartate + H(+). It functions in the pathway pyrimidine metabolism; UMP biosynthesis via de novo pathway; (S)-dihydroorotate from bicarbonate: step 3/3. Its function is as follows. Catalyzes the reversible cyclization of carbamoyl aspartate to dihydroorotate. In Psychromonas ingrahamii (strain DSM 17664 / CCUG 51855 / 37), this protein is Dihydroorotase.